A 243-amino-acid chain; its full sequence is Ribonuclease PH (243 aa).

Phosphate is bound by residues Arg-91 and 129 to 131; that span reads GTR.

This sequence belongs to the RNase PH family. Homohexameric ring arranged as a trimer of dimers.

The catalysed reaction is tRNA(n+1) + phosphate = tRNA(n) + a ribonucleoside 5'-diphosphate. In terms of biological role, phosphorolytic 3'-5' exoribonuclease that plays an important role in tRNA 3'-end maturation. Removes nucleotide residues following the 3'-CCA terminus of tRNAs; can also add nucleotides to the ends of RNA molecules by using nucleoside diphosphates as substrates, but this may not be physiologically important. Probably plays a role in initiation of 16S rRNA degradation (leading to ribosome degradation) during starvation. This chain is Ribonuclease PH, found in Burkholderia mallei (strain NCTC 10247).